The sequence spans 581 residues: Arginine--tRNA ligase (581 aa).

The 'HIGH' region motif lies at 126–136 (PNLAKEMHVGH).

The protein belongs to the class-I aminoacyl-tRNA synthetase family. Monomer.

It is found in the cytoplasm. The catalysed reaction is tRNA(Arg) + L-arginine + ATP = L-arginyl-tRNA(Arg) + AMP + diphosphate. This is Arginine--tRNA ligase from Shewanella denitrificans (strain OS217 / ATCC BAA-1090 / DSM 15013).